The following is a 98-amino-acid chain: Small ribosomal subunit protein bTHXm (98 aa).

The transit peptide at 1–35 (MAAMQWCGAMTRRIMMTQRTSAALNCSARYSSLSP) directs the protein to the mitochondrion. Residues 52-71 (DKKTKKGKRFKGSYGNSRGK) are disordered. Residues 53 to 62 (KKTKKGKRFK) show a composition bias toward basic residues.

It belongs to the bacterial ribosomal protein bTHX family. As to quaternary structure, component of the mitochondrial ribosome small subunit.

The protein resides in the mitochondrion. The sequence is that of Small ribosomal subunit protein bTHXm from Arabidopsis thaliana (Mouse-ear cress).